Here is a 300-residue protein sequence, read N- to C-terminus: GTPase Era (300 aa).

Residues 8-176 (RCGYVAIVGR…EKVIADHLPE (169 aa)) form the Era-type G domain. A G1 region spans residues 16–23 (GRPNVGKS). 16–23 (GRPNVGKS) is a binding site for GTP. The tract at residues 42-46 (QTTRH) is G2. Residues 63 to 66 (DTPG) are G3. Residues 63 to 67 (DTPGM) and 125 to 128 (NKTD) contribute to the GTP site. Residues 125-128 (NKTD) form a G4 region. A G5 region spans residues 155–157 (ISA). One can recognise a KH type-2 domain in the interval 199–283 (VREKIMRQLG…MLNLWVKVKG (85 aa)).

Belongs to the TRAFAC class TrmE-Era-EngA-EngB-Septin-like GTPase superfamily. Era GTPase family. Monomer.

It is found in the cytoplasm. The protein resides in the cell inner membrane. Its function is as follows. An essential GTPase that binds both GDP and GTP, with rapid nucleotide exchange. Plays a role in 16S rRNA processing and 30S ribosomal subunit biogenesis and possibly also in cell cycle regulation and energy metabolism. This is GTPase Era from Pseudomonas fluorescens (strain Pf0-1).